Consider the following 558-residue polypeptide: Dihydroxy-acid dehydratase (558 aa).

Mg(2+) is bound at residue aspartate 78. Cysteine 119 contributes to the [2Fe-2S] cluster binding site. 2 residues coordinate Mg(2+): aspartate 120 and lysine 121. Lysine 121 is subject to N6-carboxylysine. Cysteine 192 contributes to the [2Fe-2S] cluster binding site. Glutamate 446 contacts Mg(2+). Serine 472 acts as the Proton acceptor in catalysis.

It belongs to the IlvD/Edd family. As to quaternary structure, homodimer. It depends on [2Fe-2S] cluster as a cofactor. The cofactor is Mg(2+).

The enzyme catalyses (2R)-2,3-dihydroxy-3-methylbutanoate = 3-methyl-2-oxobutanoate + H2O. It catalyses the reaction (2R,3R)-2,3-dihydroxy-3-methylpentanoate = (S)-3-methyl-2-oxopentanoate + H2O. It functions in the pathway amino-acid biosynthesis; L-isoleucine biosynthesis; L-isoleucine from 2-oxobutanoate: step 3/4. Its pathway is amino-acid biosynthesis; L-valine biosynthesis; L-valine from pyruvate: step 3/4. Functionally, functions in the biosynthesis of branched-chain amino acids. Catalyzes the dehydration of (2R,3R)-2,3-dihydroxy-3-methylpentanoate (2,3-dihydroxy-3-methylvalerate) into 2-oxo-3-methylpentanoate (2-oxo-3-methylvalerate) and of (2R)-2,3-dihydroxy-3-methylbutanoate (2,3-dihydroxyisovalerate) into 2-oxo-3-methylbutanoate (2-oxoisovalerate), the penultimate precursor to L-isoleucine and L-valine, respectively. The protein is Dihydroxy-acid dehydratase of Campylobacter jejuni subsp. doylei (strain ATCC BAA-1458 / RM4099 / 269.97).